The chain runs to 474 residues: tRNA-2-methylthio-N(6)-dimethylallyladenosine synthase (474 aa).

Residues 3 to 120 (QKLHIKTWGC…LPEMINQIRA (118 aa)) enclose the MTTase N-terminal domain. The [4Fe-4S] cluster site is built by C12, C49, C83, C157, C161, and C164. Positions 143 to 375 (KAEGPTAFVS…QQRINNQAAQ (233 aa)) constitute a Radical SAM core domain. Residues 378 to 441 (RAMLGTEQRV…TNSLRGDVVR (64 aa)) form the TRAM domain.

The protein belongs to the methylthiotransferase family. MiaB subfamily. Monomer. It depends on [4Fe-4S] cluster as a cofactor.

It is found in the cytoplasm. The catalysed reaction is N(6)-dimethylallyladenosine(37) in tRNA + (sulfur carrier)-SH + AH2 + 2 S-adenosyl-L-methionine = 2-methylsulfanyl-N(6)-dimethylallyladenosine(37) in tRNA + (sulfur carrier)-H + 5'-deoxyadenosine + L-methionine + A + S-adenosyl-L-homocysteine + 2 H(+). Functionally, catalyzes the methylthiolation of N6-(dimethylallyl)adenosine (i(6)A), leading to the formation of 2-methylthio-N6-(dimethylallyl)adenosine (ms(2)i(6)A) at position 37 in tRNAs that read codons beginning with uridine. This is tRNA-2-methylthio-N(6)-dimethylallyladenosine synthase from Mannheimia succiniciproducens (strain KCTC 0769BP / MBEL55E).